A 31-amino-acid chain; its full sequence is Monocyclic monoterpene ketone monooxygenase (31 aa).

20 to 25 (GAGFXG) is an FAD binding site.

In terms of assembly, monomer. The cofactor is FAD.

It carries out the reaction 1-hydroxylimonen-2-one + NADPH + O2 = 3-isopropenyl-6-oxoheptanoate + NADP(+) + H2O. It catalyses the reaction (1R,4S)-1-hydroxylimonen-2-one + NADPH + O2 + H(+) = (4S,7S)-7-hydroxy-4-isopropenyl-7-methyloxepan-2-one + NADP(+) + H2O. The catalysed reaction is (1S,4R)-1-hydroxylimonen-2-one + NADPH + O2 + H(+) = (4R,7R)-7-hydroxy-4-isopropenyl-7-methyloxepan-2-one + NADP(+) + H2O. The enzyme catalyses (1R,4R)-dihydrocarvone + NADPH + O2 + H(+) = (4R,7R)-4-isopropenyl-7-methyloxepan-2-one + NADP(+) + H2O. It carries out the reaction (1S,4R)-menthone + NADPH + O2 + H(+) = (4S,7R)-7-isopropyl-4-methyloxepan-2-one + NADP(+) + H2O. It catalyses the reaction (1R,4S)-menthone + NADPH + O2 + H(+) = (4R,7S)-7-isopropyl-4-methyloxepan-2-one + NADP(+) + H2O. The catalysed reaction is (1S,4R)-isodihydrocarvone + NADPH + O2 + H(+) = (3S,6R)-6-isopropenyl-3-methyloxepan-2-one + NADP(+) + H2O. Its pathway is terpene metabolism; monoterpene degradation. Catalyzes the NADPH- and oxygen-dependent oxidation of the monocyclic monoterpene ketones 1-hydroxy-2-oxolimonene, dihydrocarvone and menthone. Is able to convert all enantiomers of these natural substrates with almost equal efficiency. Is thus involved in the conversion of the monocyclic monoterpene ketone intermediates formed in the degradation pathways of all stereoisomers of three different monocyclic monoterpenes, i.e. limonene, (dihydro)carveol and menthol, which likely make R.erythropolis able to grow on these compounds as the sole source of carbon and energy. The protein is Monocyclic monoterpene ketone monooxygenase of Rhodococcus erythropolis (Arthrobacter picolinophilus).